A 414-amino-acid polypeptide reads, in one-letter code: Gamma-glutamyl phosphate reductase (414 aa).

The protein belongs to the gamma-glutamyl phosphate reductase family.

The protein localises to the cytoplasm. It catalyses the reaction L-glutamate 5-semialdehyde + phosphate + NADP(+) = L-glutamyl 5-phosphate + NADPH + H(+). It participates in amino-acid biosynthesis; L-proline biosynthesis; L-glutamate 5-semialdehyde from L-glutamate: step 2/2. Catalyzes the NADPH-dependent reduction of L-glutamate 5-phosphate into L-glutamate 5-semialdehyde and phosphate. The product spontaneously undergoes cyclization to form 1-pyrroline-5-carboxylate. This is Gamma-glutamyl phosphate reductase from Xanthomonas oryzae pv. oryzae (strain KACC10331 / KXO85).